We begin with the raw amino-acid sequence, 100 residues long: Urease subunit gamma (100 aa).

It belongs to the urease gamma subunit family. As to quaternary structure, heterotrimer of UreA (gamma), UreB (beta) and UreC (alpha) subunits. Three heterotrimers associate to form the active enzyme.

Its subcellular location is the cytoplasm. It catalyses the reaction urea + 2 H2O + H(+) = hydrogencarbonate + 2 NH4(+). It participates in nitrogen metabolism; urea degradation; CO(2) and NH(3) from urea (urease route): step 1/1. The protein is Urease subunit gamma of Staphylococcus aureus (strain N315).